A 1070-amino-acid chain; its full sequence is DNA-directed RNA polymerase subunit beta (1070 aa).

The protein belongs to the RNA polymerase beta chain family. As to quaternary structure, in plastids the minimal PEP RNA polymerase catalytic core is composed of four subunits: alpha, beta, beta', and beta''. When a (nuclear-encoded) sigma factor is associated with the core the holoenzyme is formed, which can initiate transcription.

It is found in the plastid. It localises to the chloroplast. It carries out the reaction RNA(n) + a ribonucleoside 5'-triphosphate = RNA(n+1) + diphosphate. Functionally, DNA-dependent RNA polymerase catalyzes the transcription of DNA into RNA using the four ribonucleoside triphosphates as substrates. This chain is DNA-directed RNA polymerase subunit beta, found in Platanus occidentalis (Sycamore).